We begin with the raw amino-acid sequence, 256 residues long: Aspirochlorine biosynthesis protein F (256 aa).

Asn-19 carries N-linked (GlcNAc...) asparagine glycosylation. A run of 3 helical transmembrane segments spans residues 21 to 41 (SITP…GPHF), 163 to 183 (LVWV…FFFT), and 214 to 234 (FGLG…ILAV).

It is found in the membrane. The protein operates within mycotoxin biosynthesis. Part of the gene cluster that mediates the biosynthesis of aspirochlorine (or antibiotic A30641), an unusual halogenated spiro compound with distinctive antifungal properties due to selective inhibition of protein biosynthesis, and which is also active against bacteria, viruses, and murine tumor cells. The non-ribosomal peptide synthetase (NRPS) aclP is responsible the formation of the diketopiperazine (DKP) core from the condensation of 2 phenylalanine residues. One Phe residue is tailored into chlorotyrosine by hydroxylation and chlorination, whereas the second Phe undergoes an unprecedented C-C bond cleavage to be converted into glycine. After formation of the DKP, sulfur is incorporated into the DKP by conjugation with glutathione by aclG, followed by its stepwise degradation to the thiol by aclI, aclJ and aclK, and the dithiol oxidation by aclT. In addition, oxygenases (aclB, aclC, aclL and aclO) and O-methyltransferases (aclM and aclU) act as tailoring enzymes to produce the intermediate dechloroaspirochlorine. Ultimately, chlorination of dechloroaspirochlorine by the halogenase aclH is the last step in the aspirochlorine pathway. The polypeptide is Aspirochlorine biosynthesis protein F (Aspergillus oryzae (strain ATCC 42149 / RIB 40) (Yellow koji mold)).